Reading from the N-terminus, the 868-residue chain is Pentatricopeptide repeat-containing protein At2g27610 (868 aa).

PPR repeat units lie at residues 57–91 (DRESYISLLFGFSRDGRTQEAKRLFLNIHRLGMEM), 92–126 (DCSIFSSVLKVSATLCDELFGRQLHCQCIKFGFLD), 127–157 (DVSVGTSLVDTYMKGSNFKDGRKVFDEMKER), 158–192 (NVVTWTTLISGYARNSMNDEVLTLFMRMQNEGTQP), 193–227 (NSFTFAAALGVLAEEGVGGRGLQVHTVVVKNGLDK), 228–258 (TIPVSNSLINLYLKCGNVRKARILFDKTEVK), 259–293 (SVVTWNSMISGYAANGLDLEALGMFYSMRLNYVRL), 294–328 (SESSFASVIKLCANLKELRFTEQLHCSVVKYGFLF), 329–359 (DQNIRTALMVAYSKCTAMLDALRLFKEIGCV), 361–395 (NVVSWTAMISGFLQNDGKEEAVDLFSEMKRKGVRP), 396–426 (NEFTYSVILTALPVISPSEVHAQVVKTNYER), 427–457 (SSTVGTALLDAYVKLGKVEEAAKVFSGIDDK), 458–492 (DIVAWSAMLAGYAQTGETEAAIKMFGELTKGGIKP), 493–528 (NEFTFSSILNVCAATNASMGQGKQFHGFAIKSRLDS), 529–559 (SLCVSSALLTMYAKKGNIESAEEVFKRQREK), 560–594 (DLVSWNSMISGYAQHGQAMKALDVFKEMKKRKVKM), 595–625 (DGVTFIGVFAACTHAGLVEEGEKYFDIMVRD), and 631–661 (TKEHNSCMVDLYSRAGQLEKAMKVIENMPNP). The segment at 666-741 (IWRTILAACR…EPGYSWIEVK (76 aa)) is type E motif. The tract at residues 742 to 772 (NKTYSFLAGDRSHPLKDQIYMKLEDLSTRLK) is type E(+) motif. The type DYW motif stretch occupies residues 773-868 (DLGYEPDTSY…DGVCSCGDFW (96 aa)).

The protein belongs to the PPR family. PCMP-H subfamily.

The protein is Pentatricopeptide repeat-containing protein At2g27610 (PCMP-H60) of Arabidopsis thaliana (Mouse-ear cress).